A 256-amino-acid chain; its full sequence is Imidazole glycerol phosphate synthase subunit HisF (256 aa).

Catalysis depends on residues aspartate 12 and aspartate 131.

The protein belongs to the HisA/HisF family. Heterodimer of HisH and HisF.

It is found in the cytoplasm. The catalysed reaction is 5-[(5-phospho-1-deoxy-D-ribulos-1-ylimino)methylamino]-1-(5-phospho-beta-D-ribosyl)imidazole-4-carboxamide + L-glutamine = D-erythro-1-(imidazol-4-yl)glycerol 3-phosphate + 5-amino-1-(5-phospho-beta-D-ribosyl)imidazole-4-carboxamide + L-glutamate + H(+). It functions in the pathway amino-acid biosynthesis; L-histidine biosynthesis; L-histidine from 5-phospho-alpha-D-ribose 1-diphosphate: step 5/9. Its function is as follows. IGPS catalyzes the conversion of PRFAR and glutamine to IGP, AICAR and glutamate. The HisF subunit catalyzes the cyclization activity that produces IGP and AICAR from PRFAR using the ammonia provided by the HisH subunit. This Stutzerimonas stutzeri (strain A1501) (Pseudomonas stutzeri) protein is Imidazole glycerol phosphate synthase subunit HisF.